The following is a 553-amino-acid chain: Arylsulfatase K (553 aa).

An N-terminal signal peptide occupies residues 1–16 (MLLLLVSVVAALALAA). Ca(2+)-binding residues include Asp-40 and Cys-80. Cys-80 serves as the catalytic Nucleophile. Cys-80 carries the 3-oxoalanine (Cys) modification. A glycan (N-linked (GlcNAc...) asparagine) is linked at Asn-108. Residue Lys-128 coordinates substrate. The N-linked (GlcNAc...) asparagine glycan is linked to Asn-191. His-249 contributes to the substrate binding site. Residue Asn-260 is glycosylated (N-linked (GlcNAc...) asparagine). Residues Asp-311 and His-312 each coordinate Ca(2+). N-linked (GlcNAc...) asparagine glycans are attached at residues Asn-373, Asn-411, and Asn-496. Residues 530-553 (SPLASSPTQSTSGSQPTLPQSTSG) form a disordered region. Over residues 534 to 553 (SSPTQSTSGSQPTLPQSTSG) the composition is skewed to low complexity.

It belongs to the sulfatase family. Ca(2+) serves as cofactor. The conversion to 3-oxoalanine (also known as C-formylglycine, FGly), of a serine or cysteine residue in prokaryotes and of a cysteine residue in eukaryotes, is critical for catalytic activity. In terms of processing, the 75-kDa precursor undergoes proteolytic processing to yield a 23 kDa form. Post-translationally, N-glycosylated with both high mannose and complex type sugars.

It is found in the secreted. It localises to the lysosome. The enzyme catalyses an aryl sulfate + H2O = a phenol + sulfate + H(+). It catalyses the reaction Hydrolysis of the 2-sulfate groups of the 2-O-sulfo-D-glucuronate residues of chondroitin sulfate, heparin and heparitin sulfate.. Its function is as follows. Catalyzes the hydrolysis of pseudosubstrates such as p-nitrocatechol sulfate and p-nitrophenyl sulfate. Catalyzes the hydrolysis of the 2-sulfate groups of the 2-O-sulfo-D-glucuronate residues of chondroitin sulfate, heparin and heparitin sulfate. Acts selectively on 2-sulfoglucuronate and lacks activity against 2-sulfoiduronate. This Mus musculus (Mouse) protein is Arylsulfatase K (Arsk).